Here is a 1090-residue protein sequence, read N- to C-terminus: MEDVDLGKDRTQLIDFVYANGNGSASNLNNRNNIPLSEKAAKEPLQTQPQEAPPAPKPKVQKQKPPVKPKKRIACSPGSAICLFLLAVAAIIFAAFLGHYLTKQNYEMMQFKSANESMTTCKNFTRSHKKHQDIVNEEDADENASIKQPTKEELALPKNVQPVWYDVSLSPKVGGNGTMGLAHVKLNIEEPTNKIVLNAKDIEFTRNLEKIQLSKEVTKRAKKSVDSGTNSTSEMPEGSGEEAMATTATTTTTESTTPVSSFVDTGIKVTNIEFDENLEKVTLTLDQELKKGSTVVLKIPFTSKVSNNNGLKEYKYKNSEGKEQSMFTTQPSYSYLRHVFPSFDQEAFKAPAAITLMHSKGSIVVANTGVKTKDDGDAQTSTLNKVLDPDFVIGDLVASEVNTTSGITIRIWTRPEVKHSTEQSLDYANQAIDAMEHILQSRLESKSLDIVAVPGFQTGNRVSPSFIVLPEEDILYNEQSNDINQKTRIARMISNRIAAQWFGGITNPEEFGTFWLNEALPRFLEVEALEKILDINSDDLWTYEMEKILERDATATSQPLRVKNVFSSADIAEIDHEFIGKKGAAVLRMIQKSVGVNVFNKAIRSFVSSYRSAYPYDDGLWKSFEKALGGKLKGWNNEPLDVAKFVNTWVDQIGFPLVSVEKLDDETVELSQERFKNDHKTKEQFKFRNAKYWFNWEVPLFLKSSGPVGNVSWLHEAFRLPLNTSDSIYLNTDSNGVYRVNYEEKRWNDIAKQLEKSHGKLSERTRARLISDVFALANSGALPFETALNVTSYLPMETATVPWLIATRIFKKLTERLEGAPIQDKLNSFIYQKIHKKFEEISSSPGEASSNYLKNRLYANLLDLMAIVKPEKSNEKLNELFVEGFLAPCQFSGNFSSDCSEVPGDLREKVYCNGVEFGNDTVFETVRELAEKEVDGAEKDLLQNSLACFRDPRALRRLILDNLNSTSTVTLLLRKMNSRPVGKEIATNWIIDNWSTVLKKKFKNDPETLNAIADAGIILDNEREKSMIETFMEHHHKSTHGIESLDKKIEEATTDIYWRKQKINELNDYLDGKMKGPAKDDEMESSEEQE.

The Cytoplasmic portion of the chain corresponds to 1–77 (MEDVDLGKDR…KPKKRIACSP (77 aa)). The segment covering 21-33 (GNGSASNLNNRNN) has biased composition (low complexity). The segment at 21 to 71 (GNGSASNLNNRNNIPLSEKAAKEPLQTQPQEAPPAPKPKVQKQKPPVKPKK) is disordered. The segment covering 59-71 (KVQKQKPPVKPKK) has biased composition (basic residues). The chain crosses the membrane as a helical; Signal-anchor for type II membrane protein span at residues 78–98 (GSAICLFLLAVAAIIFAAFLG). Topologically, residues 99–1090 (HYLTKQNYEM…DEMESSEEQE (992 aa)) are lumenal. Residues asparagine 115, asparagine 123, asparagine 143, asparagine 176, and asparagine 230 are each glycosylated (N-linked (GlcNAc...) asparagine). The disordered stretch occupies residues 217 to 259 (VTKRAKKSVDSGTNSTSEMPEGSGEEAMATTATTTTTESTTPV). Residues 241–257 (EEAMATTATTTTTESTT) show a composition bias toward low complexity. Residues asparagine 402, asparagine 710, asparagine 723, asparagine 789, asparagine 894, asparagine 919, asparagine 964, and asparagine 993 are each glycosylated (N-linked (GlcNAc...) asparagine). Residues 1069–1080 (YLDGKMKGPAKD) are compositionally biased toward basic and acidic residues. The interval 1069–1090 (YLDGKMKGPAKDDEMESSEEQE) is disordered. Residues 1081–1090 (DEMESSEEQE) are compositionally biased toward acidic residues.

The protein belongs to the peptidase M1 family.

The protein localises to the membrane. The chain is Aminopeptidase-like protein AC3.5 from Caenorhabditis elegans.